The following is a 124-amino-acid chain: Glutaredoxin-2 (124 aa).

Cys-13 and Cys-16 are oxidised to a cystine.

It belongs to the glutaredoxin family. In terms of assembly, homodimer.

It localises to the host cytoplasm. Its function is as follows. Glutaredoxin necessary for virion morphogenesis and virus replication. Functions as a thiol-disulfide transfer protein between membrane-associated OPG128 and substrates OPG095 or OPG053. The complete pathway for formation of disulfide bonds in intracellular virion membrane proteins sequentially involves oxidation of OPG072, OPG128 and OPG088. Exhibit thioltransferase and dehydroascorbate reductase activities in vitro. The protein is Glutaredoxin-2 (OPG088) of Camelus.